The primary structure comprises 627 residues: DNA mismatch repair protein MutL (627 aa).

Residues 376 to 404 form a disordered region; sequence APASTNEVREGSAARAGNYQPPEPPSREA.

This sequence belongs to the DNA mismatch repair MutL/HexB family.

In terms of biological role, this protein is involved in the repair of mismatches in DNA. It is required for dam-dependent methyl-directed DNA mismatch repair. May act as a 'molecular matchmaker', a protein that promotes the formation of a stable complex between two or more DNA-binding proteins in an ATP-dependent manner without itself being part of a final effector complex. This is DNA mismatch repair protein MutL from Aeromonas salmonicida (strain A449).